A 147-amino-acid chain; its full sequence is Large ribosomal subunit protein bL9 (147 aa).

Belongs to the bacterial ribosomal protein bL9 family.

Its function is as follows. Binds to the 23S rRNA. The polypeptide is Large ribosomal subunit protein bL9 (Bdellovibrio bacteriovorus (strain ATCC 15356 / DSM 50701 / NCIMB 9529 / HD100)).